Here is a 137-residue protein sequence, read N- to C-terminus: SPbeta prophage-derived uncharacterized protein YoqU (137 aa).

This chain is SPbeta prophage-derived uncharacterized protein YoqU (yoqU), found in Bacillus subtilis (strain 168).